A 494-amino-acid polypeptide reads, in one-letter code: Uric acid degradation bifunctional protein PucL (494 aa).

Residues 1–174 (MFTMDDLNQM…EKGETQMKRT (174 aa)) are OHCU decarboxylase. His-68 serves as the catalytic Proton donor; for OHCU decarboxylase activity. Residues Pro-69, 81 to 85 (SVREQ), and 116 to 120 (FILAV) each bind 5-hydroxy-2-oxo-4-ureido-2,5-dihydro-1H-imidazole-5-carboxylate. The urate oxidase stretch occupies residues 175-494 (MSYGKGNVFA…AAEKCRSLKA (320 aa)). The active-site Charge relay system; for urate oxidase activity is Lys-179. Catalysis depends on Lys-190, which acts as the Charge relay system. Residue Thr-239 is the Charge relay system; for urate oxidase activity of the active site. Positions 239, 240, 349, 366, 414, 415, and 441 each coordinate urate.

The protein in the N-terminal section; belongs to the OHCU decarboxylase family. This sequence in the C-terminal section; belongs to the uricase family.

The catalysed reaction is 5-hydroxy-2-oxo-4-ureido-2,5-dihydro-1H-imidazole-5-carboxylate + H(+) = (S)-allantoin + CO2. It catalyses the reaction urate + O2 + H2O = 5-hydroxyisourate + H2O2. The protein operates within purine metabolism; urate degradation; (S)-allantoin from urate: step 1/3. It functions in the pathway purine metabolism; urate degradation; (S)-allantoin from urate: step 3/3. Catalyzes two steps in the degradation of uric acid, i.e. the oxidation of uric acid to 5-hydroxyisourate (HIU) and the stereoselective decarboxylation of 2-oxo-4-hydroxy-4-carboxy-5-ureidoimidazoline (OHCU) to (S)-allantoin. The sequence is that of Uric acid degradation bifunctional protein PucL (pucL) from Bacillus subtilis (strain 168).